Consider the following 241-residue polypeptide: Uridylate kinase (241 aa).

15–18 (KMSG) contacts ATP. The interval 23-28 (GAEGFG) is involved in allosteric activation by GTP. Residue Gly57 participates in UMP binding. ATP is bound by residues Gly58 and Arg62. UMP is bound by residues Asp77 and 138 to 145 (TGNPLFTT). Residues Thr165, Phe171, and Asp174 each coordinate ATP.

Belongs to the UMP kinase family. Homohexamer.

The protein localises to the cytoplasm. The catalysed reaction is UMP + ATP = UDP + ADP. It participates in pyrimidine metabolism; CTP biosynthesis via de novo pathway; UDP from UMP (UMPK route): step 1/1. With respect to regulation, allosterically activated by GTP. Inhibited by UTP. Its function is as follows. Catalyzes the reversible phosphorylation of UMP to UDP. The sequence is that of Uridylate kinase from Blochmanniella pennsylvanica (strain BPEN).